The sequence spans 249 residues: tRNA pseudouridine synthase A (249 aa).

The active-site Nucleophile is Asp-52. Residue Tyr-110 coordinates substrate.

The protein belongs to the tRNA pseudouridine synthase TruA family. Homodimer.

It carries out the reaction uridine(38/39/40) in tRNA = pseudouridine(38/39/40) in tRNA. Its function is as follows. Formation of pseudouridine at positions 38, 39 and 40 in the anticodon stem and loop of transfer RNAs. This Azobacteroides pseudotrichonymphae genomovar. CFP2 protein is tRNA pseudouridine synthase A.